Reading from the N-terminus, the 129-residue chain is Large ribosomal subunit protein bL19 (129 aa).

The protein belongs to the bacterial ribosomal protein bL19 family.

In terms of biological role, this protein is located at the 30S-50S ribosomal subunit interface and may play a role in the structure and function of the aminoacyl-tRNA binding site. This Granulibacter bethesdensis (strain ATCC BAA-1260 / CGDNIH1) protein is Large ribosomal subunit protein bL19.